The primary structure comprises 456 residues: Cell adhesion molecule 1 (456 aa).

The first 47 residues, 1-47, serve as a signal peptide directing secretion; sequence MASAVLPSGSQCAAAAAVAAAAAPPGLRLRLLLLLLSAAALIPTGDG. One can recognise an Ig-like V-type domain in the interval 48–142; the sequence is QNLFTKDVTV…PPQESYTTIT (95 aa). At 48 to 388 the chain is on the extracellular side; the sequence is QNLFTKDVTV…EEGTIGAVDH (341 aa). Cys-67 and Cys-127 are oxidised to a cystine. Asn-70, Asn-104, Asn-116, and Asn-168 each carry an N-linked (GlcNAc...) asparagine glycan. Ig-like C2-type domains are found at residues 147–241 and 246–332; these read PRNL…RYLE and PQVH…YMLY. Intrachain disulfides connect Cys-169–Cys-223 and Cys-270–Cys-316. N-linked (GlcNAc...) asparagine glycans are attached at residues Asn-307 and Asn-311. A helical membrane pass occupies residues 389 to 409; that stretch reads AVIGGVVAVVVFAMLCLLIIL. Residues 410–456 are Cytoplasmic-facing; it reads GRYFARHKGTYFTHEAKGADDAADADTAIINAEGGQNNSEEKKEYFI. A Phosphothreonine modification is found at Thr-436. A Phosphoserine modification is found at Ser-448.

It belongs to the nectin family. As to quaternary structure, homodimer (via Ig-like V-type domain). Interacts with FARP1. Interacts (via Ig-like V-type domain) with CRTAM (via Ig-like V-type domain); the interaction competes with CRTAM homodimerization and CADM1 homodimerization. Interacts (via C-terminus) with EPB41L3/DAL1. The interaction with EPB41L3/DAL1 may act to anchor CADM1 to the actin cytoskeleton. Interacts (via C-terminus) with MPP2 (via PDZ domain). Interacts (via C-terminus) with MPP3 (via PDZ domain); this interaction connects CADM1 with DLG1. Interacts (via C-terminus) with PALS2 (via PDZ domain). Post-translationally, N-glycosylated. In terms of processing, glycosylation at Asn-70 and Asn-104 promotes adhesive binding and synapse induction. In terms of tissue distribution, expressed dominantly in epithelial cells but not expressed in fibroblast cells (at protein level). Expressed in the T-cell area of lymph nodes, specifically in CD8+ and CD4- CD8- dendritic cells (at protein level). Expressed in CD8+ dendritic cells in the spleen (at protein level). Expressed in CD103+ dendritic cells in the small intestine lamina propria and mesenteric lymph nodes (at protein level). Expressed in brain, lung, kidney, testis, heart, spleen and liver, but not expressed in skeletal muscle.

Its subcellular location is the cell membrane. It is found in the synaptic cell membrane. Its function is as follows. Mediates homophilic cell-cell adhesion in a Ca(2+)-independent manner. Also mediates heterophilic cell-cell adhesion with CADM3 and NECTIN3 in a Ca(2+)-independent manner. Interaction with CRTAM promotes natural killer (NK) cell cytotoxicity and interferon-gamma (IFN-gamma) secretion by CD8+ T-cells in vitro as well as NK cell-mediated rejection of tumors expressing CADM1 in vivo. In mast cells, may mediate attachment to and promote communication with nerves. CADM1, together with MITF, is essential for development and survival of mast cells in vivo. By interacting with CRTAM and thus promoting the adhesion between CD8+ T-cells and CD8+ dendritic cells, regulates the retention of activated CD8+ T-cell within the draining lymph node. Required for the intestinal retention of intraepithelial CD4+ CD8+ T-cells and, to a lesser extent, intraepithelial and lamina propria CD8+ T-cells and CD4+ T-cells. Interaction with CRTAM promotes the adhesion to gut-associated CD103+ dendritic cells, which may facilitate the expression of gut-homing and adhesion molecules on T-cells and the conversion of CD4+ T-cells into CD4+ CD8+ T-cells. Acts as a synaptic cell adhesion molecule and plays a role in the formation of dendritic spines and in synapse assembly. May be involved in neuronal migration, axon growth, pathfinding, and fasciculation on the axons of differentiating neurons. May play diverse roles in the spermatogenesis including in the adhesion of spermatocytes and spermatids to Sertoli cells and for their normal differentiation into mature spermatozoa. This is Cell adhesion molecule 1 from Mus musculus (Mouse).